Consider the following 69-residue polypeptide: Putative membrane protein insertion efficiency factor (69 aa).

This sequence belongs to the UPF0161 family.

It is found in the cell membrane. Functionally, could be involved in insertion of integral membrane proteins into the membrane. In Caldanaerobacter subterraneus subsp. tengcongensis (strain DSM 15242 / JCM 11007 / NBRC 100824 / MB4) (Thermoanaerobacter tengcongensis), this protein is Putative membrane protein insertion efficiency factor.